The primary structure comprises 282 residues: B3 domain-containing protein At5g25475 (282 aa).

The segment at residues 20–114 (WKSLSPGQTW…NLEVQIFKNN (95 aa)) is a DNA-binding region (TF-B3). A disordered region spans residues 127–178 (PETEPFHPTPKKPHKETTPASSFASGSGCSANGGTNGRGKQRSSDVKNPERY). Low complexity predominate over residues 144–159 (TPASSFASGSGCSANG).

It localises to the nucleus. This is B3 domain-containing protein At5g25475 from Arabidopsis thaliana (Mouse-ear cress).